The primary structure comprises 381 residues: Arf-GAP with dual PH domain-containing protein 2 (381 aa).

The 123-residue stretch at 9–131 (KRLLELLRAP…FMADGETISL (123 aa)) folds into the Arf-GAP domain. A C4-type zinc finger spans residues 25-48 (CADCGAADPDWASYKLGIFICLNC). PH domains follow at residues 132–233 (PGNR…AARL) and 255–361 (NYLK…GVLS).

In terms of tissue distribution, highly expressed in placenta, spleen, kidney, skeletal muscle and adrenal gland. Weakly expressed in thyroid, liver, heart, lung, small intestine, peripheral blood leukocytes. Not detected in spinal cord, brain, stomach, trachea, colon, lymph node and bone marrow.

It localises to the cytoplasm. It is found in the cell membrane. In terms of biological role, GTPase-activating protein for the ADP ribosylation factor family (Potential). Binds phosphatidylinositol 3,4,5-trisphosphate (PtdInsP3) and inositol 1,3,4,5-tetrakisphosphate (InsP4). Possesses a stoichiometry of two binding sites for InsP4 with identical affinity. This chain is Arf-GAP with dual PH domain-containing protein 2 (ADAP2), found in Homo sapiens (Human).